The following is a 2909-amino-acid chain: Micronemal protein 15 (2909 aa).

An N-terminal signal peptide occupies residues 1–29; sequence MVFRATREPFRLPLVAAFIALFLLKGVTC. Asn512, Asn563, Asn792, Asn813, Asn986, Asn1007, Asn1057, Asn1142, Asn1319, Asn1395, and Asn1713 each carry an N-linked (GlcNAc...) asparagine glycan. In terms of domain architecture, TSP type-1 1 spans 1755–1811; it reads TAIVGEWGEWSACTGTCFSQWWTPKRTRTRLVLAELSHSQIPSVSETATCLDLPPCG. A disordered region spans residues 1937–2073; the sequence is RRKGIMSRRR…RSQARNQTPD (137 aa). Positions 1967–1977 are enriched in polar residues; it reads SEQSGKASQNG. An N-linked (GlcNAc...) asparagine glycan is attached at Asn1976. Basic residues predominate over residues 1978-1988; the sequence is SRRHRASRKQK. The segment covering 2004 to 2016 has biased composition (polar residues); the sequence is GESTLHGTGTNAY. The span at 2049–2065 shows a compositional bias: basic residues; sequence KARRARRGAGRFRKSRS. Asn2333 carries an N-linked (GlcNAc...) asparagine glycan. The 66-residue stretch at 2484 to 2549 folds into the TSP type-1 2 domain; that stretch reads TCDYTEWSEW…EKCDWMPVCP (66 aa). Cystine bridges form between Cys2485/Cys2528, Cys2496/Cys2500, and Cys2542/Cys2548. The interval 2552 to 2587 is disordered; the sequence is EGEEEDDATGGVEPRGEPIVPPWSPERPTDENNQAM. Asn2706 is a glycosylation site (N-linked (GlcNAc...) asparagine). The helical transmembrane segment at 2709–2729 threads the bilayer; sequence TWVICLLLGVGGGICFVLSCV. N-linked (GlcNAc...) asparagine glycans are attached at residues Asn2751, Asn2768, and Asn2793. A disordered region spans residues 2759–2846; sequence ESHKLRRQGN…IGQTSPTQQR (88 aa). Residues 2801–2815 are compositionally biased toward acidic residues; it reads PEEEPWQFEDRDEEP. The span at 2837-2846 shows a compositional bias: polar residues; that stretch reads IGQTSPTQQR.

As to quaternary structure, component of a complex, at least composed of cysteine repeat modular protein A (CRMPa), cysteine repeat modular protein B (CRMPb), micronemal protein 15 (MIC15) and thrombospondin type 1 domain-containing protein (TSP1).

Its subcellular location is the membrane. Its function is as follows. Required for rhoptry secretion. Plays a role in host cell invasion. The chain is Micronemal protein 15 from Toxoplasma gondii.